The primary structure comprises 415 residues: Phosphoglycerate kinase (415 aa).

Substrate is bound by residues Asp-27 to Asn-29, Arg-44, His-67 to Arg-70, Arg-124, and Arg-164. ATP is bound by residues Glu-336 and Gly-362–Met-365.

It belongs to the phosphoglycerate kinase family. Monomer.

The protein localises to the cytoplasm. The enzyme catalyses (2R)-3-phosphoglycerate + ATP = (2R)-3-phospho-glyceroyl phosphate + ADP. It participates in carbohydrate degradation; glycolysis; pyruvate from D-glyceraldehyde 3-phosphate: step 2/5. This chain is Phosphoglycerate kinase, found in Sulfolobus acidocaldarius (strain ATCC 33909 / DSM 639 / JCM 8929 / NBRC 15157 / NCIMB 11770).